The primary structure comprises 161 residues: Nucleotide-binding protein Dtpsy_2240 (161 aa).

This sequence belongs to the YajQ family.

Functionally, nucleotide-binding protein. The protein is Nucleotide-binding protein Dtpsy_2240 of Acidovorax ebreus (strain TPSY) (Diaphorobacter sp. (strain TPSY)).